Consider the following 485-residue polypeptide: Envelope glycoprotein C (485 aa).

The N-terminal stretch at 1-32 (MGLVNIMRFITFAYIICGGFILTRTSGTSASA) is a signal peptide. The span at 28 to 72 (TSASASPATPTTNTGEGTSSPVTPTYTTSTDSNNSTATNNSTDVN) shows a compositional bias: low complexity. A disordered region spans residues 28 to 88 (TSASASPATP…TPSHPHSHEN (61 aa)). The Virion surface segment spans residues 33 to 444 (SPATPTTNTG…DASPIVEDMP (412 aa)). Residues asparagine 60, asparagine 61, asparagine 66, asparagine 67, asparagine 72, asparagine 108, asparagine 116, asparagine 147, asparagine 220, asparagine 225, and asparagine 286 are each glycosylated (N-linked (GlcNAc...) asparagine; by host). A disulfide bridge links cysteine 92 with cysteine 109. The Ig-like domain occupies 237–330 (PLMDLSVHPS…EWYRDEVSFS (94 aa)). Intrachain disulfides connect cysteine 256-cysteine 318, cysteine 357-cysteine 416, and cysteine 361-cysteine 390. Residues 445-468 (VLTGIIAVTCGAAALALVVLITAV) form a helical membrane-spanning segment. The Cytoplasmic portion of the chain corresponds to 469–485 (CFYCSKPSQVPYKKADF).

The protein belongs to the herpesviridae glycoprotein C family. In terms of assembly, interacts with host complement component C3; this interaction inhibits host immune response by disregulating complement cascade.

Its subcellular location is the virion membrane. Essential for the initial attachment to heparan sulfate moieties of the host cell surface proteoglycans. Also plays a role in host immune evasion by inhibiting the host complement cascade activation. The sequence is that of Envelope glycoprotein C (gC) from Equine herpesvirus 4 (strain 1942) (EHV-4).